A 273-amino-acid polypeptide reads, in one-letter code: Pyrroline-5-carboxylate reductase (273 aa).

This sequence belongs to the pyrroline-5-carboxylate reductase family.

The protein localises to the cytoplasm. It catalyses the reaction L-proline + NADP(+) = (S)-1-pyrroline-5-carboxylate + NADPH + 2 H(+). The catalysed reaction is L-proline + NAD(+) = (S)-1-pyrroline-5-carboxylate + NADH + 2 H(+). It functions in the pathway amino-acid biosynthesis; L-proline biosynthesis; L-proline from L-glutamate 5-semialdehyde: step 1/1. This Pisum sativum (Garden pea) protein is Pyrroline-5-carboxylate reductase (PROC).